Consider the following 177-residue polypeptide: 2-C-methyl-D-erythritol 2,4-cyclodiphosphate synthase (177 aa).

The a divalent metal cation site is built by D8 and H10. 4-CDP-2-C-methyl-D-erythritol 2-phosphate-binding positions include 8-10 (DVH) and 34-35 (HS). H42 lines the a divalent metal cation pocket. 4-CDP-2-C-methyl-D-erythritol 2-phosphate contacts are provided by residues 56 to 58 (DIG), 61 to 65 (FPDTD), 132 to 135 (TTEE), F139, and R142.

It belongs to the IspF family. As to quaternary structure, homotrimer. It depends on a divalent metal cation as a cofactor.

The enzyme catalyses 4-CDP-2-C-methyl-D-erythritol 2-phosphate = 2-C-methyl-D-erythritol 2,4-cyclic diphosphate + CMP. It functions in the pathway isoprenoid biosynthesis; isopentenyl diphosphate biosynthesis via DXP pathway; isopentenyl diphosphate from 1-deoxy-D-xylulose 5-phosphate: step 4/6. In terms of biological role, involved in the biosynthesis of isopentenyl diphosphate (IPP) and dimethylallyl diphosphate (DMAPP), two major building blocks of isoprenoid compounds. Catalyzes the conversion of 4-diphosphocytidyl-2-C-methyl-D-erythritol 2-phosphate (CDP-ME2P) to 2-C-methyl-D-erythritol 2,4-cyclodiphosphate (ME-CPP) with a corresponding release of cytidine 5-monophosphate (CMP). The protein is 2-C-methyl-D-erythritol 2,4-cyclodiphosphate synthase of Agathobacter rectalis (strain ATCC 33656 / DSM 3377 / JCM 17463 / KCTC 5835 / VPI 0990) (Eubacterium rectale).